A 286-amino-acid chain; its full sequence is Tryptophan 2,3-dioxygenase (286 aa).

Substrate contacts are provided by residues 55–59 (FIIIH), tyrosine 117, and arginine 121. Residue histidine 244 coordinates heme. Threonine 258 is a substrate binding site.

It belongs to the tryptophan 2,3-dioxygenase family. In terms of assembly, homotetramer. Heme is required as a cofactor.

The catalysed reaction is L-tryptophan + O2 = N-formyl-L-kynurenine. The protein operates within amino-acid degradation; L-tryptophan degradation via kynurenine pathway; L-kynurenine from L-tryptophan: step 1/2. In terms of biological role, heme-dependent dioxygenase that catalyzes the oxidative cleavage of the L-tryptophan (L-Trp) pyrrole ring and converts L-tryptophan to N-formyl-L-kynurenine. Catalyzes the oxidative cleavage of the indole moiety. In Shewanella woodyi (strain ATCC 51908 / MS32), this protein is Tryptophan 2,3-dioxygenase.